The sequence spans 155 residues: Ribosome maturation factor RimP (155 aa).

The protein belongs to the RimP family.

The protein localises to the cytoplasm. Its function is as follows. Required for maturation of 30S ribosomal subunits. This is Ribosome maturation factor RimP from Synechococcus sp. (strain CC9902).